Reading from the N-terminus, the 915-residue chain is Probable dipeptidyl-aminopeptidase B (915 aa).

2 disordered regions span residues 1 to 20 (MAGE…TRGS) and 52 to 74 (QDSR…NEEE). At 1–95 (MAGEKGGSRD…GGKTVQKTTK (95 aa)) the chain is on the cytoplasmic side. The span at 55–72 (RLGEKDQRDDDHDQYRNE) shows a compositional bias: basic and acidic residues. A helical; Signal-anchor for type II membrane protein transmembrane segment spans residues 96–116 (IVLWALLFLCVGGWSLAFVIF). Topologically, residues 117-915 (LFRGHDTPQT…RAETWGGLPV (799 aa)) are vacuolar. 4 N-linked (GlcNAc...) asparagine glycosylation sites follow: Asn133, Asn179, Asn349, and Asn572. Residue Ser754 is the Charge relay system of the active site. N-linked (GlcNAc...) asparagine glycosylation occurs at Asn813. Residues Asp831 and His864 each act as charge relay system in the active site. A glycan (N-linked (GlcNAc...) asparagine) is linked at Asn900.

Belongs to the peptidase S9B family.

The protein resides in the vacuole membrane. The enzyme catalyses Release of an N-terminal dipeptide, Xaa-Yaa-|-Zaa-, from a polypeptide, preferentially when Yaa is Pro, provided Zaa is neither Pro nor hydroxyproline.. Type IV dipeptidyl-peptidase which removes N-terminal dipeptides sequentially from polypeptides having unsubstituted N-termini provided that the penultimate residue is proline. In Blastomyces gilchristii (strain SLH14081) (Blastomyces dermatitidis), this protein is Probable dipeptidyl-aminopeptidase B (DAPB).